The sequence spans 418 residues: Acyl-[acyl-carrier-protein] desaturase 4, chloroplastic (418 aa).

The transit peptide at 1 to 70 directs the protein to the chloroplast; that stretch reads MASSGLAVAA…ATAAAPADTA (70 aa). Fe cation-binding residues include Glu-152, Glu-190, His-193, Glu-243, Glu-276, and His-279.

Belongs to the fatty acid desaturase type 2 family. Homodimer. Fe(2+) is required as a cofactor.

The protein resides in the plastid. The protein localises to the chloroplast. Its pathway is lipid metabolism; fatty acid metabolism. Functionally, introduces a cis double bond in the acyl chain of an acyl-[acyl-carrier protein]. This Oryza sativa subsp. japonica (Rice) protein is Acyl-[acyl-carrier-protein] desaturase 4, chloroplastic.